Consider the following 475-residue polypeptide: Glycogen synthase (475 aa).

Lys15 is an ADP-alpha-D-glucose binding site.

This sequence belongs to the glycosyltransferase 1 family. Bacterial/plant glycogen synthase subfamily.

It carries out the reaction [(1-&gt;4)-alpha-D-glucosyl](n) + ADP-alpha-D-glucose = [(1-&gt;4)-alpha-D-glucosyl](n+1) + ADP + H(+). It functions in the pathway glycan biosynthesis; glycogen biosynthesis. Functionally, synthesizes alpha-1,4-glucan chains using ADP-glucose. The protein is Glycogen synthase of Chlamydia felis (strain Fe/C-56) (Chlamydophila felis).